The chain runs to 1046 residues: UDP-N-acetylglucosamine--peptide N-acetylglucosaminyltransferase 110 kDa subunit (1046 aa).

An N-acetylalanine modification is found at alanine 2. Residues serine 3 and serine 4 each carry the phosphoserine; by GSK3-beta; alternate modification. Residues serine 3 and serine 4 are each glycosylated (O-linked (GlcNAc) serine; alternate). At serine 20 the chain carries Phosphoserine. TPR repeat units follow at residues 21–54 (FQGL…EPDN), 89–122 (AEAY…KPDF), 123–156 (IDGY…NPDL), 157–190 (YCVR…QPNF), 191–224 (AVAW…DPNF), 225–258 (LDAY…SPNH), 259–292 (AVVH…QPHF), 293–326 (PDAY…CPTH), 327–360 (ADSL…FPEF), 361–394 (AAAH…SPTF), 395–428 (ADAY…NPAF), and 429–462 (ADAH…KPDF). An O-linked (GlcNAc) serine; by autocatalysis glycan is attached at serine 399. Threonine 454 carries the post-translational modification Phosphothreonine. Residues 463–473 (PDAYCNLAHCL) form a TPR 13; truncated repeat. Residues 464-466 (DAY) carry the DFP motif motif. The short motif at 487–503 (KKLVSIVAEQLEKNRLP) is the Nuclear localization signal element. Histidine 508 (proton acceptor) is an active-site residue. UDP-binding positions include glutamine 849, lysine 852, 906–908 (APK), 911–914 (HVRR), 930–932 (HTT), and aspartate 935. Tyrosine 989 is subject to Phosphotyrosine. Positions 991-1010 (KKIRGKVWKQRISSPLFNTK) are required for phosphatidylinositol 3,4,5-triphosphate binding.

Belongs to the glycosyltransferase 41 family. O-GlcNAc transferase subfamily. As to quaternary structure, monomer; may exist in different oligomerization states in cells. Homotrimer, oligomerizes via TPR repeats 6 and 7. Trimerization is not necessary for activity in vitro, however it increases affinity for UDP-GlcNAc. Component of a THAP1/THAP3-HCFC1-OGT complex. Component of the NSL complex at least composed of MOF/KAT8, KANSL1, KANSL2, KANSL3, MCRS1, PHF20, OGT1/OGT, WDR5 and HCFC1. Found in a complex with KIF5B, RHOT1, RHOT2 and TRAK1. Found in a complex composed of at least SINHCAF, SIN3A, HDAC1, SAP30, RBBP4, OGT and TET1. Component of a complex composed of KMT2E/MLL5, OGT and USP7; the complex stabilizes KMT2E/MLL5, preventing KMT2E/MLL5 ubiquitination and proteasomal-mediated degradation. Interacts (via TPRs 1-6) with SIN3A; the interaction mediates transcriptional repression in parallel with histone deacetylase. Interacts (via TPR 5-6) with TET1, TET2 and TET3. Interacts (via TPR repeats 6 and 7) with ATXN10. Interacts with NSD2. Interacts with PROSER1; this interaction mediates TET2 O-GlcNAcylation and stability by promoting the interaction between OGT and TET2. In terms of processing, ubiquitinated by the SCF(FBXO31) complex, leading to its proteasomal degradation. Phosphorylation on Ser-3 or Ser-4 by GSK3-beta positively regulates its activity. Phosphorylation at Thr-454 by AMPK promotes nuclear localization. Post-translationally, glycosylated via autocatalysis; O-GlcNAcylation at Ser-399 promotes nuclear localization.

The protein localises to the cytoplasm. It is found in the nucleus. Its subcellular location is the cell membrane. The protein resides in the mitochondrion membrane. It localises to the cell projection. The enzyme catalyses L-seryl-[protein] + UDP-N-acetyl-alpha-D-glucosamine = 3-O-(N-acetyl-beta-D-glucosaminyl)-L-seryl-[protein] + UDP + H(+). It catalyses the reaction L-threonyl-[protein] + UDP-N-acetyl-alpha-D-glucosamine = 3-O-(N-acetyl-beta-D-glucosaminyl)-L-threonyl-[protein] + UDP + H(+). It participates in protein modification; protein glycosylation. Subject to product inhibition by UDP. In terms of biological role, catalyzes the transfer of a single N-acetylglucosamine from UDP-GlcNAc to a serine or threonine residue in cytoplasmic and nuclear proteins resulting in their modification with a beta-linked N-acetylglucosamine (O-GlcNAc). Glycosylates a large and diverse number of proteins including histone H2B, AKT1, AMPK, ATG4B, CAPRIN1, EZH2, FNIP1, GSDMD, KRT7, LMNA, LMNB1, LMNB2, RPTOR, HOXA1, PFKL, KMT2E/MLL5, MAPT/TAU, TET2, RBL2, RET, NOD2 and HCFC1. Can regulate their cellular processes via cross-talk between glycosylation and phosphorylation or by affecting proteolytic processing. Involved in insulin resistance in muscle and adipocyte cells via glycosylating insulin signaling components and inhibiting the 'Thr-308' phosphorylation of AKT1, enhancing IRS1 phosphorylation and attenuating insulin signaling. Involved in glycolysis regulation by mediating glycosylation of 6-phosphofructokinase PFKL, inhibiting its activity. Plays a key role in chromatin structure by mediating O-GlcNAcylation of 'Ser-112' of histone H2B: recruited to CpG-rich transcription start sites of active genes via its interaction with TET proteins (TET1, TET2 or TET3). As part of the NSL complex indirectly involved in acetylation of nucleosomal histone H4 on several lysine residues. O-GlcNAcylation of 'Ser-75' of EZH2 increases its stability, and facilitating the formation of H3K27me3 by the PRC2/EED-EZH2 complex. Stabilizes KMT2E/MLL5 by mediating its glycosylation, thereby preventing KMT2E/MLL5 ubiquitination. Regulates circadian oscillation of the clock genes and glucose homeostasis in the liver. Stabilizes clock proteins BMAL1 and CLOCK through O-glycosylation, which prevents their ubiquitination and subsequent degradation. Promotes the CLOCK-BMAL1-mediated transcription of genes in the negative loop of the circadian clock such as PER1/2 and CRY1/2. O-glycosylates HCFC1 and regulates its proteolytic processing and transcriptional activity. Component of a THAP1/THAP3-HCFC1-OGT complex that is required for the regulation of the transcriptional activity of RRM1. Regulates mitochondrial motility in neurons by mediating glycosylation of TRAK1. Promotes autophagy by mediating O-glycosylation of ATG4B. Acts as a regulator of mTORC1 signaling by mediating O-glycosylation of RPTOR and FNIP1: O-GlcNAcylation of RPTOR in response to glucose sufficiency promotes activation of the mTORC1 complex. The polypeptide is UDP-N-acetylglucosamine--peptide N-acetylglucosaminyltransferase 110 kDa subunit (Ogt) (Mus musculus (Mouse)).